Reading from the N-terminus, the 196-residue chain is Adenylyl-sulfate kinase (196 aa).

Position 31 to 38 (31 to 38 (GLSGAGKS)) interacts with ATP. Residue Ser105 is the Phosphoserine intermediate of the active site.

It belongs to the APS kinase family.

It catalyses the reaction adenosine 5'-phosphosulfate + ATP = 3'-phosphoadenylyl sulfate + ADP + H(+). Its pathway is sulfur metabolism; hydrogen sulfide biosynthesis; sulfite from sulfate: step 2/3. Its function is as follows. Catalyzes the synthesis of activated sulfate. The chain is Adenylyl-sulfate kinase (cysC) from Pseudomonas aeruginosa (strain ATCC 15692 / DSM 22644 / CIP 104116 / JCM 14847 / LMG 12228 / 1C / PRS 101 / PAO1).